The primary structure comprises 746 residues: tRNA (cytosine(34)-C(5))-methyltransferase (746 aa).

A disordered region spans residues 1-30; it reads MGRNQKQNFFAARKRQKRENGPKRTDRQAQ. Over residues 18-30 the composition is skewed to basic and acidic residues; that stretch reads RENGPKRTDRQAQ. Residues 184 to 190, Asp216, Asp243, and Asp270 each bind S-adenosyl-L-methionine; that span reads CAAPGSK. The active-site Nucleophile is Cys323. Disordered regions lie at residues 454–475 and 701–746; these read QPAAEPQVDADGKPIEEKSVPW and SAEA…VATS. A compositionally biased stretch (basic and acidic residues) spans 463–472; sequence ADGKPIEEKS. Positions 704–714 are enriched in acidic residues; that stretch reads AEADSSGDGDA. The segment covering 731-746 has biased composition (polar residues); it reads AETTGTPMDTEVVATS.

Belongs to the class I-like SAM-binding methyltransferase superfamily. RsmB/NOP family. TRM4 subfamily. In terms of tissue distribution, ubiquitously expressed during embryonic development. Some enrichment is observed in the proventriculus area of the foregut and in the hindgut.

Its subcellular location is the nucleus. It is found in the nucleolus. The enzyme catalyses cytidine(34) in tRNA precursor + S-adenosyl-L-methionine = 5-methylcytidine(34) in tRNA precursor + S-adenosyl-L-homocysteine + H(+). Functionally, RNA methyltransferase that methylates tRNAs. Methylates cytosine to 5-methylcytosine (m5C) at position 34 of intron-containing tRNA(Leu)(CAA) precursors. Required for short-term memory. This chain is tRNA (cytosine(34)-C(5))-methyltransferase, found in Drosophila melanogaster (Fruit fly).